A 643-amino-acid chain; its full sequence is Clathrin interactor 1 (643 aa).

Residues 16-149 enclose the ENTH domain; sequence NVVMNYSEIE…QDDDRLREER (134 aa). Arg29 lines the a 1,2-diacyl-sn-glycero-3-phospho-(1D-myo-inositol-4,5-bisphosphate) pocket. Positions 52-54 are interaction with VTI1B; that stretch reads FMY. Arg67 provides a ligand contact to a 1,2-diacyl-sn-glycero-3-phospho-(1D-myo-inositol-4,5-bisphosphate). Interaction with VTI1B regions lie at residues 94–96 and 142–153; these read SER and DDRLREERKKAK. Phosphoserine is present on residues Ser163, Ser166, Ser173, Ser205, Ser210, Ser227, Ser245, and Ser299. A disordered region spans residues 219 to 331; the sequence is FRRKDREDSP…SSGDLVDLFD (113 aa). The span at 222-239 shows a compositional bias: basic and acidic residues; sequence KDREDSPERCSDSDEEKK. Residues 300 to 310 show a composition bias toward polar residues; it reads PDQNASTHTPQ. Thr308 is subject to Phosphothreonine. The span at 311–323 shows a compositional bias: low complexity; the sequence is SSLKTSVPSSKSS. Ser312 and Ser642 each carry phosphoserine.

This sequence belongs to the epsin family. As to quaternary structure, binds clathrin heavy chain and AP-2. Interacts with VTI1B. Interacts with GGA2 (via GAE domain). Interacts with AP1G1 (via GAE domain). Interacts with AP1G2 (via GAE domain).

It localises to the cytoplasm. It is found in the perinuclear region. The protein localises to the membrane. Its subcellular location is the cytoplasmic vesicle. The protein resides in the clathrin-coated vesicle. In terms of biological role, binds to membranes enriched in phosphatidylinositol 4,5-bisphosphate (PtdIns(4,5)P2). May have a role in transport via clathrin-coated vesicles from the trans-Golgi network to endosomes. Stimulates clathrin assembly. The chain is Clathrin interactor 1 (CLINT1) from Bos taurus (Bovine).